The following is a 203-amino-acid chain: Holliday junction branch migration complex subunit RuvA (203 aa).

The interval 1–63 is domain I; it reads MIAFVSGPVA…EDSLTLYGFV (63 aa). Residues 64-141 form a domain II region; it reads DDDERQVFEL…GEPLGTGGPA (78 aa). A flexible linker region spans residues 141-145; that stretch reads AIGRA. The segment at 146 to 203 is domain III; that stretch reads VTTGWREQLHAALIGLGYATREADEAVAAVAPQAEAAGGTPQVGQLLKAALQTLNRTR.

This sequence belongs to the RuvA family. As to quaternary structure, homotetramer. Forms an RuvA(8)-RuvB(12)-Holliday junction (HJ) complex. HJ DNA is sandwiched between 2 RuvA tetramers; dsDNA enters through RuvA and exits via RuvB. An RuvB hexamer assembles on each DNA strand where it exits the tetramer. Each RuvB hexamer is contacted by two RuvA subunits (via domain III) on 2 adjacent RuvB subunits; this complex drives branch migration. In the full resolvosome a probable DNA-RuvA(4)-RuvB(12)-RuvC(2) complex forms which resolves the HJ.

Its subcellular location is the cytoplasm. Functionally, the RuvA-RuvB-RuvC complex processes Holliday junction (HJ) DNA during genetic recombination and DNA repair, while the RuvA-RuvB complex plays an important role in the rescue of blocked DNA replication forks via replication fork reversal (RFR). RuvA specifically binds to HJ cruciform DNA, conferring on it an open structure. The RuvB hexamer acts as an ATP-dependent pump, pulling dsDNA into and through the RuvAB complex. HJ branch migration allows RuvC to scan DNA until it finds its consensus sequence, where it cleaves and resolves the cruciform DNA. This is Holliday junction branch migration complex subunit RuvA from Streptomyces avermitilis (strain ATCC 31267 / DSM 46492 / JCM 5070 / NBRC 14893 / NCIMB 12804 / NRRL 8165 / MA-4680).